Consider the following 124-residue polypeptide: Small ribosomal subunit protein uS13 (124 aa).

The span at 92–117 shows a compositional bias: basic residues; that stretch reads RRGLPVRGQRTKSNARTRKGPRKTVA. A disordered region spans residues 92–124; sequence RRGLPVRGQRTKSNARTRKGPRKTVANKKIESK.

The protein belongs to the universal ribosomal protein uS13 family. As to quaternary structure, part of the 30S ribosomal subunit. Forms a loose heterodimer with protein S19. Forms two bridges to the 50S subunit in the 70S ribosome.

Located at the top of the head of the 30S subunit, it contacts several helices of the 16S rRNA. In the 70S ribosome it contacts the 23S rRNA (bridge B1a) and protein L5 of the 50S subunit (bridge B1b), connecting the 2 subunits; these bridges are implicated in subunit movement. Contacts the tRNAs in the A and P-sites. This Mycoplasmoides gallisepticum (strain R(low / passage 15 / clone 2)) (Mycoplasma gallisepticum) protein is Small ribosomal subunit protein uS13.